The chain runs to 196 residues: ATP-dependent Clp protease proteolytic subunit (196 aa).

S101 functions as the Nucleophile in the catalytic mechanism. The active site involves H126.

Belongs to the peptidase S14 family. Component of the chloroplastic Clp protease core complex.

The protein localises to the plastid. Its subcellular location is the chloroplast stroma. It catalyses the reaction Hydrolysis of proteins to small peptides in the presence of ATP and magnesium. alpha-casein is the usual test substrate. In the absence of ATP, only oligopeptides shorter than five residues are hydrolyzed (such as succinyl-Leu-Tyr-|-NHMec, and Leu-Tyr-Leu-|-Tyr-Trp, in which cleavage of the -Tyr-|-Leu- and -Tyr-|-Trp bonds also occurs).. Cleaves peptides in various proteins in a process that requires ATP hydrolysis. Has a chymotrypsin-like activity. Plays a major role in the degradation of misfolded proteins. This is ATP-dependent Clp protease proteolytic subunit from Citrus sinensis (Sweet orange).